A 151-amino-acid polypeptide reads, in one-letter code: MYKKIEIFTDGSCLGNPGPGGCAAILRYKQHKKEFSIGYRLTTNNRMELMAAIIALESLKNPCQIILNTDSQYLLHGITQWIHIWKKHHWKTSEEKLVKNIDLWQRLDVAIQIHSIIHWNWLKSHTGHPDNERCDQLARLAAKCPINEDFY.

The 143-residue stretch at 1–143 (MYKKIEIFTD…CDQLARLAAK (143 aa)) folds into the RNase H type-1 domain. Mg(2+)-binding residues include Asp-10, Glu-48, Asp-70, and Asp-135.

Belongs to the RNase H family. In terms of assembly, monomer. Mg(2+) is required as a cofactor.

It is found in the cytoplasm. It catalyses the reaction Endonucleolytic cleavage to 5'-phosphomonoester.. Endonuclease that specifically degrades the RNA of RNA-DNA hybrids. The chain is Ribonuclease H from Blochmanniella pennsylvanica (strain BPEN).